The sequence spans 549 residues: Dicarboxylate transporter 2.2, chloroplastic (549 aa).

The N-terminal 54 residues, 1-54 (MESLALRSISLSASYLSLHRSSSKSFALLPPSISVHTSPTLRSLSISSPRFTLR), are a transit peptide targeting the chloroplast. The disordered stretch occupies residues 57-79 (ASSLPEEQNKPQPPPPSPPQPQG). Residues 67–77 (PQPPPPSPPQP) show a composition bias toward pro residues. Transmembrane regions (helical) follow at residues 79–99 (GAKLIPLAISVSIGLIVRFLI), 115–135 (IFLFTISGLVLGPLPVGAWAF), 151–171 (TAFAAFTNELIWLIAISFFFA), 220–240 (AGGVFLPVIKSLAISAGSYPG), 247–267 (LGSFLIQTQLQCSGASGAILL), 294–314 (WFKVASVPAFVSLLCTPLIIY), 344–364 (NEWIMLGAMAFTVSLWVFGEA), 365–385 (IGIASVVSAMIGLSTLLLLGV), 403–423 (WFAVLIGMAGQLTNLGVVAWM), 436–456 (LTWPASFIILQACYLLIHYLF), 470–490 (FLAMQIAAGVPGVLAALCLAF), and 523–543 (VGFVMALVQAIIWGGVGSFWW).

Belongs to the SLC13A/DASS transporter (TC 2.A.47) family. DIT1 subfamily. Expressed in roots, rosette and cauline leaves, stems, flowers and siliques.

Its subcellular location is the plastid. It is found in the chloroplast inner membrane. In terms of biological role, may be involved in the transport of dicarboxylate compounds. The protein is Dicarboxylate transporter 2.2, chloroplastic (DIT2-2) of Arabidopsis thaliana (Mouse-ear cress).